Reading from the N-terminus, the 488-residue chain is Cysteine--tRNA ligase (488 aa).

Position 29 (Cys29) interacts with Zn(2+). The 'HIGH' region motif lies at 31 to 41 (ATVQGMPHVGH). Cys227, His252, and Glu256 together coordinate Zn(2+). The 'KMSKS' region motif lies at 283–287 (KMSKS). Position 286 (Lys286) interacts with ATP.

Belongs to the class-I aminoacyl-tRNA synthetase family. As to quaternary structure, monomer. Zn(2+) serves as cofactor.

The protein localises to the cytoplasm. The catalysed reaction is tRNA(Cys) + L-cysteine + ATP = L-cysteinyl-tRNA(Cys) + AMP + diphosphate. The chain is Cysteine--tRNA ligase from Pseudarthrobacter chlorophenolicus (strain ATCC 700700 / DSM 12829 / CIP 107037 / JCM 12360 / KCTC 9906 / NCIMB 13794 / A6) (Arthrobacter chlorophenolicus).